Consider the following 1358-residue polypeptide: DNA-directed RNA polymerase subunit beta (1358 aa).

The protein belongs to the RNA polymerase beta chain family. The RNAP catalytic core consists of 2 alpha, 1 beta, 1 beta' and 1 omega subunit. When a sigma factor is associated with the core the holoenzyme is formed, which can initiate transcription.

The catalysed reaction is RNA(n) + a ribonucleoside 5'-triphosphate = RNA(n+1) + diphosphate. In terms of biological role, DNA-dependent RNA polymerase catalyzes the transcription of DNA into RNA using the four ribonucleoside triphosphates as substrates. This chain is DNA-directed RNA polymerase subunit beta, found in Thioalkalivibrio sulfidiphilus (strain HL-EbGR7).